The following is a 449-amino-acid chain: MMLGTEGGEGFVVKVRGLPWSCSADEVQRFFSDCKIQNGAQGIRFIYTREGRPSGEAFVELESEDEVKLALKKDRETMGHRYVEVFKSNNVEMDWVLKHTGPNSPDTANDGFVRLRGLPFGCSKEEIVQFFSGLEIVPNGITLPVDFQGRSTGEAFVQFASQEIAEKALKKHKERIGHRYIEIFKSSRAEVRTHYDPPRKLMAMQRPGPYDRPGAGRGYNSIGRGAGFERMRRGAYGGGYGGYDDYNGYNDGYGFGSDRFGRDLNYCFSGMSDHRYGDGGSTFQSTTGHCVHMRGLPYRATENDIYNFFSPLNPVRVHIEIGPDGRVTGEADVEFATHEDAVAAMSKDKANMQHRYVELFLNSTAGASGGAYEHRYVELFLNSTAGASGGAYGSQMMGGMGLSNQSSYGGPASQQLSGGYGGGYGGQSSMSGYDQVLQENSSDFQSNIA.

The residue at position 1 (Met1) is an N-acetylmethionine; in Heterogeneous nuclear ribonucleoprotein H; alternate. Met2 is modified (N-acetylmethionine; in Heterogeneous nuclear ribonucleoprotein H, N-terminally processed). Positions 11–90 (FVVKVRGLPW…RYVEVFKSNN (80 aa)) constitute an RRM 1 domain. At Ser23 the chain carries Phosphoserine. Residue Lys35 forms a Glycyl lysine isopeptide (Lys-Gly) (interchain with G-Cter in SUMO2) linkage. Residues Ser54 and Ser63 each carry the phosphoserine modification. Glycyl lysine isopeptide (Lys-Gly) (interchain with G-Cter in SUMO2) cross-links involve residues Lys87 and Lys98. Residues 111–188 (GFVRLRGLPF…RYIEIFKSSR (78 aa)) enclose the RRM 2 domain. A Dimethylated arginine; alternate modification is found at Arg233. At Arg233 the chain carries Omega-N-methylarginine; alternate. The stretch at 234–249 (GAYGGGYGGYDDYNGY) is one 1-1 repeat. The segment at 234-433 (GAYGGGYGGY…YGGQSSMSGY (200 aa)) is 2 X 16 AA Gly-rich approximate repeats. At Tyr246 the chain carries Phosphotyrosine. Positions 289–364 (HCVHMRGLPY…RYVELFLNST (76 aa)) constitute an RRM 3 domain. A Phosphoserine modification is found at Ser310. 3 repeat units span residues 354–372 (HRYV…GGAY), 374–392 (HRYV…GGAY), and 418–433 (GGYG…MSGY). Positions 354–392 (HRYVELFLNSTAGASGGAYEHRYVELFLNSTAGASGGAY) are 2 X 19 AA perfect repeats.

In terms of assembly, part of a ternary complex containing FUBP2, PTBP1, PTBP2 and HNRNPH1. Identified in the spliceosome C complex. Interacts with IGF2BP1. Interacts with CUGBP1; the interaction is RNA-dependent. Interacts with MBNL1; the interaction in RNA-independent. In terms of tissue distribution, expressed ubiquitously.

Its subcellular location is the nucleus. The protein localises to the nucleoplasm. In terms of biological role, this protein is a component of the heterogeneous nuclear ribonucleoprotein (hnRNP) complexes which provide the substrate for the processing events that pre-mRNAs undergo before becoming functional, translatable mRNAs in the cytoplasm. Mediates pre-mRNA alternative splicing regulation. Inhibits, together with CUGBP1, insulin receptor (IR) pre-mRNA exon 11 inclusion in myoblast. Binds to the IR RNA. Binds poly(RG). The protein is Heterogeneous nuclear ribonucleoprotein H (HNRNPH1) of Homo sapiens (Human).